We begin with the raw amino-acid sequence, 211 residues long: Ras-related protein Rab-38 (211 aa).

The GTP site is built by Gly19, Val20, Gly21, Lys22, Thr23, Ser24, Ser35, Ser36, Tyr38, and Thr41. Mg(2+) is bound at residue Thr23. Residues 32–46 (QNFSSHYRATIGVDF) carry the Switch 1 motif. Residues Thr41 and Asp65 each contribute to the Mg(2+) site. GTP is bound by residues Gly68, Lys128, Asp130, Ala160, and Lys161. The Switch 2 motif lies at 68–81 (GQERFGNMTRVYYR). A lipid anchor (S-palmitoyl cysteine) is attached at Cys205. A lipid anchor (S-geranylgeranyl cysteine) is attached at Cys208.

It belongs to the small GTPase superfamily. Rab family. In terms of assembly, interacts with ANKRD27. Mg(2+) serves as cofactor. Although at least one in vitro system can process and methylate the prenylated C-terminal, in an in vitro system that normally express Rab-38 and in vivo the prenylated C-terminal is not proteolytically processed and not methylated. As to expression, expressed in melanocytes.

It localises to the cell membrane. It is found in the melanosome. The protein localises to the cytoplasmic vesicle. Its subcellular location is the phagosome. The protein resides in the phagosome membrane. It localises to the melanosome membrane. The enzyme catalyses GTP + H2O = GDP + phosphate + H(+). With respect to regulation, regulated by guanine nucleotide exchange factors (GEFs) including the BLOC-3 complex composed of HPS1 and HPS4 which promote the exchange of bound GDP for free GTP. Regulated by GTPase activating proteins (GAPs) including SGSM2 which increase the GTP hydrolysis activity. Inhibited by GDP dissociation inhibitors (GDIs). Its function is as follows. The small GTPases Rab are key regulators of intracellular membrane trafficking, from the formation of transport vesicles to their fusion with membranes. Rabs cycle between an inactive GDP-bound form and an active GTP-bound form that is able to recruit to membranes different sets of downstream effectors directly responsible for vesicle formation, movement, tethering and fusion. RAB38 may be involved in melanosomal transport and docking. Involved in the proper sorting of TYRP1. Involved in peripheral melanosomal distribution of TYRP1 in melanocytes; the function, which probably is implicating vesicle-trafficking, includes cooperation with ANKRD27 and VAMP7. Plays a role in the maturation of phagosomes that engulf pathogens, such as S.aureus and M.tuberculosis. Plays an important role in the control of melanin production and melanosome biogenesis. In concert with RAB32, regulates the proper trafficking of melanogenic enzymes TYR, TYRP1 and DCT/TYRP2 to melanosomes in melanocytes. The chain is Ras-related protein Rab-38 from Homo sapiens (Human).